Here is a 182-residue protein sequence, read N- to C-terminus: Adenylate kinase (182 aa).

12–17 contacts ATP; the sequence is GAGKGT. Residues 32–61 form an NMP region; it reads STGDLLRDEVSSGSVLGIKAAEIMNKGELV. AMP is bound by residues Thr33, Arg38, 59–61, 85–88, and Gln92; these read ELV and GFPR. Positions 126 to 132 are LID; sequence ERGRQDD. Arg127 lines the ATP pocket. The AMP site is built by Arg129 and Arg140. Ala168 is an ATP binding site.

This sequence belongs to the adenylate kinase family. Monomer.

The protein localises to the cytoplasm. It catalyses the reaction AMP + ATP = 2 ADP. It functions in the pathway purine metabolism; AMP biosynthesis via salvage pathway; AMP from ADP: step 1/1. In terms of biological role, catalyzes the reversible transfer of the terminal phosphate group between ATP and AMP. Plays an important role in cellular energy homeostasis and in adenine nucleotide metabolism. The chain is Adenylate kinase from Prochlorococcus marinus (strain NATL2A).